The sequence spans 87 residues: Acetolactate synthase isozyme 2 small subunit (87 aa).

One can recognise an ACT domain in the interval 5-78; the sequence is QVNVSARFNP…DVAHVAICQS (74 aa).

In terms of assembly, tetramer of two large and two small chains. Mg(2+) is required as a cofactor. It depends on thiamine diphosphate as a cofactor.

The catalysed reaction is 2 pyruvate + H(+) = (2S)-2-acetolactate + CO2. It participates in amino-acid biosynthesis; L-isoleucine biosynthesis; L-isoleucine from 2-oxobutanoate: step 1/4. It functions in the pathway amino-acid biosynthesis; L-valine biosynthesis; L-valine from pyruvate: step 1/4. This Escherichia coli O6:H1 (strain CFT073 / ATCC 700928 / UPEC) protein is Acetolactate synthase isozyme 2 small subunit (ilvM).